The following is a 200-amino-acid chain: H-2 class I histocompatibility antigen, Q9 alpha chain (200 aa).

Residues 1–21 form the signal peptide; it reads MALTMLLLLVAAALTLIETRA. Residues 22-111 form an alpha-1 region; it reads GQHSLQYFHT…AQSYYNQSKG (90 aa). The Extracellular portion of the chain corresponds to 22–200; it reads GQHSLQYFHT…RYLELGKETL (179 aa). A glycan (N-linked (GlcNAc...) asparagine) is linked at N107. An alpha-2 region spans residues 112 to 200; it reads GSHTLQWMYG…RYLELGKETL (89 aa). C122 and C185 are disulfide-bonded.

It belongs to the MHC class I family. Heterodimer of an alpha chain and a beta chain (beta-2-microglobulin).

The protein resides in the membrane. In terms of biological role, involved in the presentation of foreign antigens to the immune system. The sequence is that of H-2 class I histocompatibility antigen, Q9 alpha chain (H2-Q9) from Mus musculus (Mouse).